A 605-amino-acid polypeptide reads, in one-letter code: Kelch-like protein 26 (605 aa).

The BTB domain maps to 53–120 (LDVVLAIDNE…AYSSEVTLDL (68 aa)). One can recognise a BACK domain in the interval 155-256 (CLNIGQMATT…RSSELVDSVQ (102 aa)). Kelch repeat units follow at residues 300–351 (SLIT…VLDN), 352–403 (FVYV…VLDG), 404–450 (QLYA…TCGD), 452–498 (LYIS…SANN), 499–549 (RIYA…LLDK), and 551–598 (IYIV…PIIL).

In terms of biological role, may play a role in endo(sarco)plasmic reticulum (ER/SR) mitochondrial signaling. May be part of the ubiquitin-proteasome system (UPS) and affect ubiquitination and degradation of target substrates. This Danio rerio (Zebrafish) protein is Kelch-like protein 26 (klhl26).